Reading from the N-terminus, the 199-residue chain is SCO2-like protein RBE_0029 (199 aa).

It belongs to the SCO1/2 family.

This chain is SCO2-like protein RBE_0029, found in Rickettsia bellii (strain RML369-C).